The sequence spans 259 residues: UPF0246 protein Pmen_1032 (259 aa).

The protein belongs to the UPF0246 family.

The protein is UPF0246 protein Pmen_1032 of Ectopseudomonas mendocina (strain ymp) (Pseudomonas mendocina).